Reading from the N-terminus, the 310-residue chain is Thioredoxin reductase (310 aa).

34-41 (NGMQPGGQ) contributes to the FAD binding site. A disulfide bridge connects residues Cys135 and Cys138. 281 to 290 (DVQDKIYRQA) is an FAD binding site.

Belongs to the class-II pyridine nucleotide-disulfide oxidoreductase family. As to quaternary structure, homodimer. It depends on FAD as a cofactor.

The protein localises to the cytoplasm. The enzyme catalyses [thioredoxin]-dithiol + NADP(+) = [thioredoxin]-disulfide + NADPH + H(+). This Rickettsia felis (strain ATCC VR-1525 / URRWXCal2) (Rickettsia azadi) protein is Thioredoxin reductase (trxB).